The sequence spans 151 residues: Small ribosomal subunit protein uS15 (151 aa).

Belongs to the universal ribosomal protein uS15 family. Component of the small ribosomal subunit.

It is found in the cytoplasm. Its function is as follows. Component of the small ribosomal subunit. The ribosome is a large ribonucleoprotein complex responsible for the synthesis of proteins in the cell. This is Small ribosomal subunit protein uS15 (rps13) from Gillichthys mirabilis (Long-jawed mudsucker).